Here is a 261-residue protein sequence, read N- to C-terminus: 5'-nucleotidase SurE (261 aa).

Asp12, Asp13, Ser43, and Asn99 together coordinate a divalent metal cation.

This sequence belongs to the SurE nucleotidase family. A divalent metal cation serves as cofactor.

Its subcellular location is the cytoplasm. The enzyme catalyses a ribonucleoside 5'-phosphate + H2O = a ribonucleoside + phosphate. Its function is as follows. Nucleotidase that shows phosphatase activity on nucleoside 5'-monophosphates. The polypeptide is 5'-nucleotidase SurE (Polynucleobacter asymbioticus (strain DSM 18221 / CIP 109841 / QLW-P1DMWA-1) (Polynucleobacter necessarius subsp. asymbioticus)).